Here is a 134-residue protein sequence, read N- to C-terminus: Large ribosomal subunit protein bL19 (134 aa).

The interval 108 to 134 (KSARIVERSDRSDKAKAQKAAAATAAE) is disordered. The span at 111–123 (RIVERSDRSDKAK) shows a compositional bias: basic and acidic residues. The span at 125 to 134 (QKAAAATAAE) shows a compositional bias: low complexity.

Belongs to the bacterial ribosomal protein bL19 family.

This protein is located at the 30S-50S ribosomal subunit interface and may play a role in the structure and function of the aminoacyl-tRNA binding site. This Methylorubrum extorquens (strain PA1) (Methylobacterium extorquens) protein is Large ribosomal subunit protein bL19.